Reading from the N-terminus, the 473-residue chain is Aspartyl/glutamyl-tRNA(Asn/Gln) amidotransferase subunit B (473 aa).

This sequence belongs to the GatB/GatE family. GatB subfamily. In terms of assembly, heterotrimer of A, B and C subunits.

The catalysed reaction is L-glutamyl-tRNA(Gln) + L-glutamine + ATP + H2O = L-glutaminyl-tRNA(Gln) + L-glutamate + ADP + phosphate + H(+). It catalyses the reaction L-aspartyl-tRNA(Asn) + L-glutamine + ATP + H2O = L-asparaginyl-tRNA(Asn) + L-glutamate + ADP + phosphate + 2 H(+). Its function is as follows. Allows the formation of correctly charged Asn-tRNA(Asn) or Gln-tRNA(Gln) through the transamidation of misacylated Asp-tRNA(Asn) or Glu-tRNA(Gln) in organisms which lack either or both of asparaginyl-tRNA or glutaminyl-tRNA synthetases. The reaction takes place in the presence of glutamine and ATP through an activated phospho-Asp-tRNA(Asn) or phospho-Glu-tRNA(Gln). In Campylobacter hominis (strain ATCC BAA-381 / DSM 21671 / CCUG 45161 / LMG 19568 / NCTC 13146 / CH001A), this protein is Aspartyl/glutamyl-tRNA(Asn/Gln) amidotransferase subunit B.